We begin with the raw amino-acid sequence, 402 residues long: MTDSGQPAIADHFYRIPRISGLIVGLWPQRIRGGGGRPWHAHLLFVFAFAMVVVGAVGEVSYGCVHLDNLVVALEAFCPGTTKAVCVLKLWVFFRSNRRWAELVQRLRAILWESRRQEAQRMLVGLATTANRLSLLLLSSGTATNAAFTLQPLIMGLYRWIVQLPGQTELPFNIILPSFAVQPGVFPLTYVLLTASGACTVFAFSFVDGFFICSCLYICGAFRLVQQDIRRIFADLHGDSVDVFTEEMNAEVRHRLAQVVERHNAIIDFCTDLTRQFTVIVLMHFLSAAFVLCSTILDIMLNTSSLSGLTYICYIIAALTQLFLYCFGGNHVSESSAAVADVLYDMEWYKCDARTRKVILMILRRSQRAKTIAVPFFTPSLPALRSILSTAGSYITLLKTFL.

Residues Met1–His42 are Cytoplasmic-facing. A helical transmembrane segment spans residues Leu43–Gly63. Over Cys64–Ala73 the chain is Extracellular. The chain crosses the membrane as a helical span at residues Leu74–Phe94. Residues Arg95–Ser134 lie on the Cytoplasmic side of the membrane. The chain crosses the membrane as a helical span at residues Leu135–Met155. Residues Gly156–Asn173 lie on the Extracellular side of the membrane. The helical transmembrane segment at Ile174–Thr194 threads the bilayer. Over Ala195–Val201 the chain is Cytoplasmic. A helical transmembrane segment spans residues Phe202–Phe222. Residues Arg223 to Gln276 are Extracellular-facing. A helical transmembrane segment spans residues Phe277–Leu297. Topologically, residues Asp298–Ser307 are cytoplasmic. The helical transmembrane segment at Gly308 to Gly328 threads the bilayer. The Extracellular segment spans residues Gly329 to Leu402.

This sequence belongs to the insect chemoreceptor superfamily. Heteromeric odorant receptor channel (TC 1.A.69) family. Or1a subfamily. In terms of assembly, interacts with Orco. Complexes exist early in the endomembrane system in olfactory sensory neurons (OSNs), coupling these complexes to the conserved ciliary trafficking pathway. As to expression, not expressed in either the antenna or maxillary palp.

It is found in the cell membrane. Functionally, odorant receptor which mediates acceptance or avoidance behavior, depending on its substrates. The odorant receptor repertoire encodes a large collection of odor stimuli that vary widely in identity, intensity, and duration. May form a complex with Orco to form odorant-sensing units, providing sensitive and prolonged odorant signaling and calcium permeability. The protein is Odorant receptor 22c (Or22c) of Drosophila melanogaster (Fruit fly).